Consider the following 947-residue polypeptide: Bifunctional glutamine synthetase adenylyltransferase/adenylyl-removing enzyme (947 aa).

Residues 1 to 440 are adenylyl removase; the sequence is MTPLSSPLSQ…VFNELIGDDE (440 aa). Positions 450-947 are adenylyl transferase; the sequence is SEPWREVWQD…ASWRKWLVAV (498 aa).

The protein belongs to the GlnE family. It depends on Mg(2+) as a cofactor.

The enzyme catalyses [glutamine synthetase]-O(4)-(5'-adenylyl)-L-tyrosine + phosphate = [glutamine synthetase]-L-tyrosine + ADP. It carries out the reaction [glutamine synthetase]-L-tyrosine + ATP = [glutamine synthetase]-O(4)-(5'-adenylyl)-L-tyrosine + diphosphate. Involved in the regulation of glutamine synthetase GlnA, a key enzyme in the process to assimilate ammonia. When cellular nitrogen levels are high, the C-terminal adenylyl transferase (AT) inactivates GlnA by covalent transfer of an adenylyl group from ATP to specific tyrosine residue of GlnA, thus reducing its activity. Conversely, when nitrogen levels are low, the N-terminal adenylyl removase (AR) activates GlnA by removing the adenylyl group by phosphorolysis, increasing its activity. The regulatory region of GlnE binds the signal transduction protein PII (GlnB) which indicates the nitrogen status of the cell. The polypeptide is Bifunctional glutamine synthetase adenylyltransferase/adenylyl-removing enzyme (Salmonella newport (strain SL254)).